We begin with the raw amino-acid sequence, 170 residues long: CFA/I fimbrial subunit B (170 aa).

A signal peptide spans 1–23 (MKFKKTIGAMALTTMFVAVSASA).

The protein belongs to the fimbrial CS1 protein family. In terms of assembly, CFA/I fimbriae are rather rigid, thread-like filaments of 0.5-1 micrometer, with an apparent axial hole, and a diameter of 7 nanometers. A single CFA/I fimbria consists of about 100 identical protein subunits.

The protein localises to the fimbrium. In terms of biological role, fimbriae (also called pili), polar filaments radiating from the surface of the bacterium to a length of 0.5-1.5 micrometers and numbering 100-300 per cell, enable bacteria to colonize the epithelium of specific host organs. This Escherichia coli O78:H11 (strain H10407 / ETEC) protein is CFA/I fimbrial subunit B (cfaB).